A 268-amino-acid polypeptide reads, in one-letter code: Exopolysaccharide production negative regulator (268 aa).

An N-terminal signal peptide occupies residues 1 to 22 (MRAGELKSLRVAVLGMSLAVGA).

Its function is as follows. Negatively modulates exopolysaccharide (EPS) biosynthesis. The chain is Exopolysaccharide production negative regulator (exoR) from Rhizobium meliloti (strain 1021) (Ensifer meliloti).